We begin with the raw amino-acid sequence, 1211 residues long: RNA helicase Mov10l1 (1211 aa).

Disordered stretches follow at residues 340–385 (KENS…GENG) and 674–710 (WNHAQDTKSSGQSTSKKNRKTMTDQAEHGTEERRVGD). Polar residues-rich tracts occupy residues 345-372 (DENINSLNSHTKNKTSQMSESSLVNNRG) and 674-688 (WNHAQDTKSSGQSTS). The span at 694 to 710 (TMTDQAEHGTEERRVGD) shows a compositional bias: basic and acidic residues. 770–777 (GPPGTGKT) is a binding site for ATP. The DEAG box signature appears at 886-889 (DEAG). A disordered region spans residues 1192-1211 (DPSYPVVPESTGPEKHQEPS).

It belongs to the DNA2/NAM7 helicase family. SDE3 subfamily. Interacts with PIWIL1. Interacts with PIWIL2. Interacts with PIWIL4. Interacts with HSPA2. Interacts with PLD6. As to expression, specifically expressed in testis.

The protein localises to the cytoplasm. It carries out the reaction ATP + H2O = ADP + phosphate + H(+). Its function is as follows. ATP-dependent RNA helicase required during spermatogenesis to repress transposable elements and prevent their mobilization, which is essential for germline integrity. Acts via the piRNA metabolic process, which mediates the repression of transposable elements during meiosis by forming complexes composed of piRNAs and Piwi proteins and governs the methylation and subsequent repression of transposons. Involved in the primary piRNA metabolic process. Specifically binds to piRNA precursors and promotes the generation of intermediate piRNA processing fragments that are subsequently loaded to Piwi proteins. Acts via its ATP-dependent RNA helicase activity: displays 5'-3' RNA unwinding activity and probably mediates unwinding and funneling of single-stranded piRNA precursor transcripts to the endonuclease that catalyzes the first cleavage step of piRNA processing to generate piRNA intermediate fragments that are subsequently loaded to Piwi proteins. The protein is RNA helicase Mov10l1 of Homo sapiens (Human).